The primary structure comprises 71 residues: Large ribosomal subunit protein bL31 (71 aa).

The Zn(2+) site is built by cysteine 16, cysteine 18, cysteine 37, and cysteine 40.

Belongs to the bacterial ribosomal protein bL31 family. Type A subfamily. As to quaternary structure, part of the 50S ribosomal subunit. The cofactor is Zn(2+).

Functionally, binds the 23S rRNA. The polypeptide is Large ribosomal subunit protein bL31 (Sodalis glossinidius (strain morsitans)).